Reading from the N-terminus, the 168-residue chain is MMKLKSNQTRTYDGDGYKKRAACLCFRSESEEEVLLVSSSRHPDRWIVPGGGMEPEEEPSVAAVREVCEEAGVKGTLGRLVGIFENQERKHRTYVYVLIVTEVLEDWEDSVNIGRKREWFKIEEAVKVLQYHKPVQASYFEALRQGYSANNGTPVLPTTYSSSMSGIR.

Met-1 is subject to N-acetylmethionine. Substrate-binding positions include Arg-10, 18–20, and 39–41; these read KKR and SSR. Residues 17–142 form the Nudix hydrolase domain; that stretch reads YKKRAACLCF…KPVQASYFEA (126 aa). Mg(2+) is bound by residues Gly-50 and Glu-66. The Nudix box motif lies at 51 to 72; the sequence is GGMEPEEEPSVAAVREVCEEAG. The Proton acceptor role is filled by Glu-69. Glu-70 provides a ligand contact to Mg(2+). Residues 89 to 91, Arg-115, and Lys-133 each bind substrate; that span reads RKH.

The protein belongs to the Nudix hydrolase family. DIPP subfamily. In terms of assembly, monomer. Mg(2+) is required as a cofactor. Requires Mn(2+) as cofactor. It depends on Zn(2+) as a cofactor.

The protein resides in the cytoplasm. It localises to the nucleus. It carries out the reaction diphospho-myo-inositol polyphosphate + H2O = myo-inositol polyphosphate + phosphate.. It catalyses the reaction 5-diphospho-1D-myo-inositol 1,2,3,4,6-pentakisphosphate + H2O = 1D-myo-inositol hexakisphosphate + phosphate + H(+). The catalysed reaction is 3,5-bis(diphospho)-1D-myo-inositol 1,2,4,6-tetrakisphosphate + H2O = 3-diphospho-1D-myo-inositol 1,2,4,5,6-pentakisphosphate + phosphate + 2 H(+). The enzyme catalyses [phosphate](n+1) + n H2O = (n+1) phosphate + n H(+). It carries out the reaction P(1),P(5)-bis(5'-adenosyl) pentaphosphate + H2O = ADP + ATP + 2 H(+). It catalyses the reaction P(1),P(6)-bis(5'-adenosyl) hexaphosphate + H2O = 2 ATP + 2 H(+). The catalysed reaction is P(1),P(4)-bis(5'-adenosyl) tetraphosphate + H2O = AMP + ATP + 2 H(+). The enzyme catalyses a 5'-end (N(7)-methyl 5'-triphosphoguanosine)-ribonucleoside in mRNA + H2O = N(7)-methyl-GMP + a 5'-end diphospho-ribonucleoside in mRNA + 2 H(+). It carries out the reaction a 5'-end (N(7)-methyl 5'-triphosphoguanosine)-ribonucleoside in mRNA + H2O = N(7)-methyl-GDP + a 5'-end phospho-ribonucleoside in mRNA + 2 H(+). Diphosphoinositol polyphosphate phosphohydrolase is inhibited by fluoride and InsP6. In terms of biological role, cleaves a beta-phosphate from the diphosphate groups in PP-InsP5 (diphosphoinositol pentakisphosphate) and [PP]2-InsP4 (bisdiphosphoinositol tetrakisphosphate), suggesting that it may play a role in signal transduction. InsP6 (inositol hexakisphosphate) is not a substrate. Acts as a negative regulator of the ERK1/2 pathway. Also able to catalyze the hydrolysis of dinucleoside oligophosphates, with diadenosine 5',5'''-P1,P6-hexaphosphate (Ap6A) and diadenosine 5',5'''- P1,P5-pentaphosphate (Ap5A) being the preferred substrates. The major reaction products are ADP and p4a from Ap6A and ADP and ATP from Ap5A. Also able to hydrolyze 5- phosphoribose 1-diphosphate. Acts as a decapping enzyme that can hydrolyze both monomethylated and unmethylated capped RNAs. Hydrolyzes monomethylated capped RNA after both the alpha- and beta-phosphates generating m7GMP + ppRNA and m7GDP + pRNA. Modulates the stability of a subset of mRNAs implicated in cell motility. Divalent cations zinc, magnesium and manganese determine its substrate specificity. Exhibits endopolyphosphatase activity in the presence of zinc ions. Exhibits diphosphoinositol polyphosphate phosphohydrolase in the presence of magnesium ions and diadenosine hexaphosphate hydrolase activity in the presence of manganese ions. Plays an important role in limiting DNA damage and maintaining cell survival upon oxidative stress via its endopolyphosphatase activity. This is Diphosphoinositol polyphosphate phosphohydrolase 1 from Rattus norvegicus (Rat).